Reading from the N-terminus, the 692-residue chain is Glycogen phosphorylase (692 aa).

An N6-(pyridoxal phosphate)lysine modification is found at Lys-586.

Belongs to the glycogen phosphorylase family. Pyridoxal 5'-phosphate serves as cofactor.

It carries out the reaction [(1-&gt;4)-alpha-D-glucosyl](n) + phosphate = [(1-&gt;4)-alpha-D-glucosyl](n-1) + alpha-D-glucose 1-phosphate. Phosphorylase is an important allosteric enzyme in carbohydrate metabolism. Enzymes from different sources differ in their regulatory mechanisms and in their natural substrates. However, all known phosphorylases share catalytic and structural properties. The chain is Glycogen phosphorylase (glgP) from Aquifex aeolicus (strain VF5).